Here is a 215-residue protein sequence, read N- to C-terminus: Virulence protein YscR (215 aa).

The next 4 helical transmembrane spans lie at 10–30 (LIGILFLLSILPLIIVMGTSF), 53–73 (IALYGLALVLSLFIMGPTLLA), 156–176 (IGLLIYLPFLAIDLLISNILL), and 188–208 (ISLPFKLLIFLLAGGWDLTLA).

Belongs to the FliP/MopC/SpaP family.

It is found in the cell membrane. In Salmonella typhimurium (strain LT2 / SGSC1412 / ATCC 700720), this protein is Virulence protein YscR (yscR).